Here is a 385-residue protein sequence, read N- to C-terminus: MEQLTPDGGVTKRIIKAGLGQRPEPTNFVSVHYDAYLLDTSEKFDSSRDRNTEFTFQLRDSKVIEAWELAIPTMQVGELAEIICTSDYGYGDQGRQYIVPPRAQLRFEVELIGFWEKPKSASERIRLAEKKKNEGNALFKLDAIESALFAYRKGREYIQDLWDCEPEELEEARQLIVSIQLNIGACHLKLKHYDHAIEVCQKALDRDMTKIKAYYRIGQAYMEKGDYESSLTFIRIGLETAIGLLAQSIDLIENTLTDNEQFIHESKVMPSSTIVTVLNYDKRDRNIPAENDRWAAKERIIKIQKTIEENSKISLDTPLVLSATIDASDSHQYQFQSSFGRELFYCSIHAIHHYASIKAICIELGLSVPSHFGLAPSTLQHIKKQ.

The 90-residue stretch at 26–115 (TNFVSVHYDA…RFEVELIGFW (90 aa)) folds into the PPIase FKBP-type domain. TPR repeat units lie at residues 128–161 (AEKK…IQDL), 177–210 (VSIQ…DMTK), and 211–244 (IKAY…AIGL).

The enzyme catalyses [protein]-peptidylproline (omega=180) = [protein]-peptidylproline (omega=0). Inhibited by both FK506 and rapamycin. PPIases accelerate the folding of proteins. It catalyzes the cis-trans isomerization of proline imidic peptide bonds in oligopeptides. This Rhizopus delemar (strain RA 99-880 / ATCC MYA-4621 / FGSC 9543 / NRRL 43880) (Mucormycosis agent) protein is FK506-binding protein 5 (FKBP5).